Here is a 120-residue protein sequence, read N- to C-terminus: Spermidine export protein MdtJ (120 aa).

4 helical membrane passes run 1 to 21, 31 to 51, 54 to 74, and 81 to 101; these read MFYW…TLSM, TGFI…SFAV, IALG…ITLF, and EALS…IVLI.

It belongs to the drug/metabolite transporter (DMT) superfamily. Small multidrug resistance (SMR) (TC 2.A.7.1) family. MdtJ subfamily. As to quaternary structure, forms a complex with MdtI.

It localises to the cell inner membrane. Catalyzes the excretion of spermidine. This Enterobacter sp. (strain 638) protein is Spermidine export protein MdtJ.